The primary structure comprises 48 residues: uncharacterized protein (48 aa).

A helical transmembrane segment spans residues 6 to 26; the sequence is IILLMIVCLVVSVLVVVWIIL.

It localises to the host membrane. This is an uncharacterized protein from Spiroplasma melliferum (SpV4).